Consider the following 286-residue polypeptide: MQFIGKIIGFFIGYKLFGGLFGGLLGIFIGHLADKKLYELGSVRSSIFGKNLTRQSLFMQTTFAVLGHIAKAKGRVTEDDIQLARQLMVRLRLDNANQQLAQQAFTLGKEANFPLRQVIQEFREACGQRADLLRFFVEVQMQAAAQDGQLDINEQQILFTIAETIGMSRFQFEQMLAMVMAAQQFRSGGFYQQYSQQQGSYQQHSYDGYQYSNNGPNIKDAYTVLGINENDEHNAVKRAYRKLMNEHHPDKLAAKGLPDEMMELAKEKAQQIQAAYDLICKTKGWK.

Over 1–6 the chain is Periplasmic; sequence MQFIGK. Residues 7-31 form a helical membrane-spanning segment; it reads IIGFFIGYKLFGGLFGGLLGIFIGH. The Cytoplasmic segment spans residues 32-286; it reads LADKKLYELG…DLICKTKGWK (255 aa). Residues 220–286 form the J domain; it reads DAYTVLGINE…DLICKTKGWK (67 aa).

Homodimer.

It localises to the cell inner membrane. Functionally, regulatory DnaK co-chaperone. Direct interaction between DnaK and DjlA is needed for the induction of the wcaABCDE operon, involved in the synthesis of a colanic acid polysaccharide capsule, possibly through activation of the RcsB/RcsC phosphotransfer signaling pathway. The colanic acid capsule may help the bacterium survive conditions outside the host. The chain is Co-chaperone protein DjlA from Haemophilus ducreyi (strain 35000HP / ATCC 700724).